A 156-amino-acid chain; its full sequence is Transcriptional repressor NrdR (156 aa).

A zinc finger lies at 3-34; it reads CPFCGNIDTQVKDSRPAEDHVSIRRRRFCPAC. The 91-residue stretch at 49–139 folds into the ATP-cone domain; that stretch reads LVVIKTSGKR…VYKNFQAADD (91 aa).

The protein belongs to the NrdR family. Zn(2+) serves as cofactor.

In terms of biological role, negatively regulates transcription of bacterial ribonucleotide reductase nrd genes and operons by binding to NrdR-boxes. The sequence is that of Transcriptional repressor NrdR from Ruegeria pomeroyi (strain ATCC 700808 / DSM 15171 / DSS-3) (Silicibacter pomeroyi).